The chain runs to 180 residues: Large ribosomal subunit protein uL5 (180 aa).

This sequence belongs to the universal ribosomal protein uL5 family. As to quaternary structure, part of the 50S ribosomal subunit; part of the 5S rRNA/L5/L18/L25 subcomplex. Contacts the 5S rRNA and the P site tRNA. Forms a bridge to the 30S subunit in the 70S ribosome.

Its function is as follows. This is one of the proteins that bind and probably mediate the attachment of the 5S RNA into the large ribosomal subunit, where it forms part of the central protuberance. In the 70S ribosome it contacts protein S13 of the 30S subunit (bridge B1b), connecting the 2 subunits; this bridge is implicated in subunit movement. Contacts the P site tRNA; the 5S rRNA and some of its associated proteins might help stabilize positioning of ribosome-bound tRNAs. This chain is Large ribosomal subunit protein uL5, found in Polynucleobacter necessarius subsp. necessarius (strain STIR1).